Here is a 158-residue protein sequence, read N- to C-terminus: Ecotin-like protein 2 (158 aa).

Belongs to the protease inhibitor I11 (ecotin) family.

The sequence is that of Ecotin-like protein 2 from Leishmania major.